The primary structure comprises 300 residues: Protoheme IX farnesyltransferase (300 aa).

A run of 9 helical transmembrane segments spans residues G24 to F44, L46 to S66, A99 to P119, A122 to V142, L145 to A165, L176 to F196, I220 to G240, L244 to I264, and A275 to L295.

This sequence belongs to the UbiA prenyltransferase family. Protoheme IX farnesyltransferase subfamily.

It localises to the cell inner membrane. It carries out the reaction heme b + (2E,6E)-farnesyl diphosphate + H2O = Fe(II)-heme o + diphosphate. It functions in the pathway porphyrin-containing compound metabolism; heme O biosynthesis; heme O from protoheme: step 1/1. Functionally, converts heme B (protoheme IX) to heme O by substitution of the vinyl group on carbon 2 of heme B porphyrin ring with a hydroxyethyl farnesyl side group. The polypeptide is Protoheme IX farnesyltransferase (Flavobacterium psychrophilum (strain ATCC 49511 / DSM 21280 / CIP 103535 / JIP02/86)).